Consider the following 518-residue polypeptide: Probable G-protein coupled receptor Mth-like 2 (518 aa).

An N-terminal signal peptide occupies residues 1–26; the sequence is MIASSKMLLSASILIYFLLNLQSSSA. The Extracellular segment spans residues 27–220; that stretch reads EIADCSFYDT…CLILPSRTGQ (194 aa). Intrachain disulfides connect cysteine 31–cysteine 85, cysteine 87–cysteine 92, cysteine 96–cysteine 190, cysteine 97–cysteine 108, and cysteine 152–cysteine 211. N-linked (GlcNAc...) asparagine glycosylation is present at asparagine 47. N-linked (GlcNAc...) asparagine glycosylation is found at asparagine 111, asparagine 125, and asparagine 201. A helical transmembrane segment spans residues 221 to 241; that stretch reads TVVMITSLICLVLTIAVYLCV. Topologically, residues 242-250 are cytoplasmic; it reads KKLMNLEGK. A helical transmembrane segment spans residues 251–271; sequence CFICYMMCLFFGYLFLLLDLW. The Extracellular portion of the chain corresponds to 272-279; the sequence is ELSLDFCK. A helical membrane pass occupies residues 280 to 300; the sequence is AAGFLGYFFVMAAFFWLSIIS. The Cytoplasmic portion of the chain corresponds to 301 to 321; sequence RHYWKCLTNPCASMNIRSERA. A helical membrane pass occupies residues 322-342; the sequence is FLLYSCFAWAMPLALTGVTYL. The Extracellular portion of the chain corresponds to 343–371; sequence ADNVVNNEEWQPRVGDEGHCWIYTKSWSA. A helical transmembrane segment spans residues 372–392; sequence MVYFYGPMVLLILFNITMFVL. Residues 393–426 lie on the Cytoplasmic side of the membrane; it reads TAKHIIDSKRTLRKIARNEGRIQKLNSDKQNYTQ. Residues 427-447 form a helical membrane-spanning segment; that stretch reads FLLLFTVMGMSWSFEIFSYLV. Residues 448 to 455 lie on the Extracellular side of the membrane; sequence QREKLWVN. The helical transmembrane segment at 456–476 threads the bilayer; that stretch reads IFLVADYFNWSQGVIIFVLFI. Over 477-518 the chain is Cytoplasmic; that stretch reads LRRKTLVLFKKQIFPKQRAFSRSATQSTIESISQTKRHFNMT.

The protein belongs to the G-protein coupled receptor 2 family. Mth subfamily.

It localises to the cell membrane. This is Probable G-protein coupled receptor Mth-like 2 (mthl2) from Drosophila melanogaster (Fruit fly).